Here is an 873-residue protein sequence, read N- to C-terminus: Ectonucleotide pyrophosphatase/phosphodiesterase family member 3 (873 aa).

The Cytoplasmic portion of the chain corresponds to 1–11 (MESMLTLAMEQ). A helical; Signal-anchor for type II membrane protein membrane pass occupies residues 12–30 (PVKRNTLKKYKIACIVLLA). At 31-873 (LLVIVSLGLG…TYLPTFETTI (843 aa)) the chain is on the extracellular side. 2 SMB domains span residues 51–93 (QGSC…VEST) and 94–138 (RIWM…GETS). 10 disulfide bridges follow: cysteine 54-cysteine 71, cysteine 58-cysteine 89, cysteine 69-cysteine 82, cysteine 75-cysteine 81, cysteine 98-cysteine 115, cysteine 103-cysteine 133, cysteine 113-cysteine 126, cysteine 119-cysteine 125, cysteine 144-cysteine 190, and cysteine 152-cysteine 364. Positions 78–80 (RGD) match the Cell attachment site motif. The segment at 160-544 (PVILFSMDGF…HGSLNHLLKV (385 aa)) is phosphodiesterase. Aspartate 167 provides a ligand contact to Zn(2+). Residue lysine 204 coordinates ATP. Threonine 205 contributes to the Zn(2+) binding site. Catalysis depends on threonine 205, which acts as the Nucleophile. ATP is bound at residue asparagine 226. The N-linked (GlcNAc...) asparagine glycan is linked to asparagine 236. Glutamate 275 provides a ligand contact to ATP. Asparagine 279 carries an N-linked (GlcNAc...) asparagine glycan. ATP is bound at residue tyrosine 289. An N-linked (GlcNAc...) asparagine glycan is attached at asparagine 290. 4 residues coordinate Zn(2+): aspartate 325, histidine 329, aspartate 372, and histidine 373. 6 disulfides stabilise this stretch: cysteine 380–cysteine 477, cysteine 428–cysteine 816, cysteine 561–cysteine 621, cysteine 573–cysteine 677, cysteine 575–cysteine 662, and cysteine 785–cysteine 795. Residue asparagine 425 is glycosylated (N-linked (GlcNAc...) asparagine). Histidine 482 lines the Zn(2+) pocket. Residues asparagine 532, asparagine 592, asparagine 685, and asparagine 697 are each glycosylated (N-linked (GlcNAc...) asparagine). The segment at 580-873 (NSIQLEQVNQ…TYLPTFETTI (294 aa)) is nuclease. Residues aspartate 750, asparagine 752, aspartate 754, histidine 756, and aspartate 758 each coordinate Ca(2+). The N-linked (GlcNAc...) asparagine glycan is linked to asparagine 787.

In terms of assembly, monomer and homodimer. Requires Zn(2+) as cofactor. Post-translationally, N-glycosylated. N-glycosylation is necessary for normal transport to the cell membrane, but is not the apical targeting signal.

The protein resides in the cell membrane. Its subcellular location is the apical cell membrane. It localises to the secreted. The catalysed reaction is a ribonucleoside 5'-triphosphate + H2O = a ribonucleoside 5'-phosphate + diphosphate + H(+). It carries out the reaction ATP + H2O = AMP + diphosphate + H(+). The enzyme catalyses CTP + H2O = CMP + diphosphate + H(+). It catalyses the reaction GTP + H2O = GMP + diphosphate + H(+). The catalysed reaction is UTP + H2O = UMP + diphosphate + H(+). It carries out the reaction UDP-N-acetyl-alpha-D-glucosamine + H2O = N-acetyl-alpha-D-glucosamine 1-phosphate + UMP + 2 H(+). The enzyme catalyses P(1),P(3)-bis(5'-adenosyl) triphosphate + H2O = AMP + ADP + 2 H(+). It catalyses the reaction P(1),P(4)-bis(5'-adenosyl) tetraphosphate + H2O = AMP + ATP + 2 H(+). The catalysed reaction is P(1),P(5)-bis(5'-adenosyl) pentaphosphate + H2O = adenosine 5'-tetraphosphate + AMP + 2 H(+). It carries out the reaction P(1),P(4)-bis(5'-guanosyl) tetraphosphate + H2O = GMP + GTP + 2 H(+). The enzyme catalyses Hydrolytically removes 5'-nucleotides successively from the 3'-hydroxy termini of 3'-hydroxy-terminated oligonucleotides.. In terms of biological role, hydrolase that metabolizes extracellular nucleotides, including ATP, GTP, UTP and CTP. Limits mast cells and basophils response during inflammation and during the chronic phases of allergic responses by eliminating extracellular ATP, a signaling molecule activating these cells in an autocrine manner. Metabolizes extracellular ATP in the lumen of the small intestine, and thereby prevents ATP-induced apoptosis of intestinal plasmacytoid dendritic cells. Has a broad specificity and can also hydrolyze UDP-GlcNAc into UMP and GlcNAc-1-phosphate and potentially several other intracellular nucleotide sugars, including UDP-GalNAc, CMP-NeuAc, GDP-Fuc, and UDP-GlcA. Thereby, could modulate glycan biosynthesis and protein glycosylation. Can hydrolyze extracellular dinucleoside polyphosphates, including the vasoactive adenosine polyphosphates as well. In addition, displays an alkaline phosphodiesterase activity in vitro. In Pongo abelii (Sumatran orangutan), this protein is Ectonucleotide pyrophosphatase/phosphodiesterase family member 3.